The primary structure comprises 566 residues: MTTREYDYIICGAGSAGNVLATRLTEDPNVTVLLLEAGGPDYRFDFRTQMPAALAYPLQGRRYNWAYETDPEPHMDNRRMECGRGKGLGGSSLINGMCYIRGNALDYDNWSTHKGLENWTYLDCLPYFKKAETRDVGPNDYHGGNGPVSVTTSKPGANPLFEAMVDAGVQAGYPRTDDLNGYQQEGFGPMDRTVTPKGRRASTARGYLDQAKGRPNLEIVTHALADRILFDGKRASGVTYLRGSERASAHARREVLVCSGAIASPQLLQRSGVGPGAWLKELDIPIVLDLPGVGQNLQDHLEMYIQYECKEPVSLYPALKWWNQPKIGLEWMLNGTGLGASNHFEAGGFIRTRDDDPWPNIQYHFLPVAINYNGSNAIEMHGFQAHVGSMRSPSRGRVKLRSRDPNAHPSILFNYMAEALDWREFRDAIRATREIMRQPALDRYRGRELNPGADCKSDKELDTFVRARAETAFHPSCSCKMGYDDMAVVDEEGRVHGLEGLRVVDASIMPIITTGNLNAPTIMIAEKIADKIRGRQPLARVDVPYFVANGAMARNVAKAVRQPETV.

7-36 (DYIICGAGSAGNVLATRLTEDPNVTVLLLE) contributes to the FAD binding site. The interval 183–203 (QQEGFGPMDRTVTPKGRRAST) is disordered. His-474 acts as the Proton acceptor in catalysis.

This sequence belongs to the GMC oxidoreductase family. Requires FAD as cofactor.

The enzyme catalyses choline + A = betaine aldehyde + AH2. The catalysed reaction is betaine aldehyde + NAD(+) + H2O = glycine betaine + NADH + 2 H(+). Its pathway is amine and polyamine biosynthesis; betaine biosynthesis via choline pathway; betaine aldehyde from choline (cytochrome c reductase route): step 1/1. In terms of biological role, involved in the biosynthesis of the osmoprotectant glycine betaine. Catalyzes the oxidation of choline to betaine aldehyde and betaine aldehyde to glycine betaine at the same rate. The sequence is that of Oxygen-dependent choline dehydrogenase from Burkholderia ambifaria (strain ATCC BAA-244 / DSM 16087 / CCUG 44356 / LMG 19182 / AMMD) (Burkholderia cepacia (strain AMMD)).